The chain runs to 74 residues: Acyl carrier protein (74 aa).

The Carrier domain maps to 1-73 (MAVFEKVQEI…DLVAYVEEQA (73 aa)). Ser-35 carries the O-(pantetheine 4'-phosphoryl)serine modification.

It belongs to the acyl carrier protein (ACP) family. 4'-phosphopantetheine is transferred from CoA to a specific serine of apo-ACP by AcpS. This modification is essential for activity because fatty acids are bound in thioester linkage to the sulfhydryl of the prosthetic group.

It localises to the cytoplasm. The protein operates within lipid metabolism; fatty acid biosynthesis. Its function is as follows. Carrier of the growing fatty acid chain in fatty acid biosynthesis. The polypeptide is Acyl carrier protein (Streptococcus pneumoniae serotype 4 (strain ATCC BAA-334 / TIGR4)).